A 398-amino-acid polypeptide reads, in one-letter code: Riboflavin transporter RfnT (398 aa).

12 helical membrane passes run 13-35 (ILTI…GGLV), 45-67 (LVTL…AAFF), 74-91 (RNAY…GVIA), 95-117 (IFAA…ASYV), 137-156 (ISWV…QLVI), 166-188 (MFAG…LFML), 220-242 (VAAG…IAMV), 252-274 (ALGI…KLIT), 281-300 (ITAL…LGGF), 305-324 (FWGA…IGAT), 345-367 (FIMF…SSGW), and 372-389 (WLVF…ILRL).

This sequence belongs to the major facilitator superfamily.

It localises to the cell membrane. Functionally, transports riboflavin into the cell. The sequence is that of Riboflavin transporter RfnT from Brucella anthropi (strain ATCC 49188 / DSM 6882 / CCUG 24695 / JCM 21032 / LMG 3331 / NBRC 15819 / NCTC 12168 / Alc 37) (Ochrobactrum anthropi).